The sequence spans 351 residues: Phenylalanine--tRNA ligase alpha subunit (351 aa).

The tract at residues 45–69 (LGDDAPIPAARRSLGSLPKDQRKDA) is disordered. Glutamate 269 is a binding site for Mg(2+).

This sequence belongs to the class-II aminoacyl-tRNA synthetase family. Phe-tRNA synthetase alpha subunit type 1 subfamily. Tetramer of two alpha and two beta subunits. Mg(2+) serves as cofactor.

The protein resides in the cytoplasm. It carries out the reaction tRNA(Phe) + L-phenylalanine + ATP = L-phenylalanyl-tRNA(Phe) + AMP + diphosphate + H(+). This chain is Phenylalanine--tRNA ligase alpha subunit, found in Corynebacterium jeikeium (strain K411).